The chain runs to 101 residues: Integration host factor subunit alpha (101 aa).

This sequence belongs to the bacterial histone-like protein family. Heterodimer of an alpha and a beta chain.

Functionally, this protein is one of the two subunits of integration host factor, a specific DNA-binding protein that functions in genetic recombination as well as in transcriptional and translational control. This is Integration host factor subunit alpha from Maricaulis maris (strain MCS10) (Caulobacter maris).